Here is a 419-residue protein sequence, read N- to C-terminus: UDP-N-acetylglucosamine 1-carboxyvinyltransferase (419 aa).

Residue 22 to 23 (KN) participates in phosphoenolpyruvate binding. Position 93 (Arg93) interacts with UDP-N-acetyl-alpha-D-glucosamine. The active-site Proton donor is the Cys117. Cys117 is modified (2-(S-cysteinyl)pyruvic acid O-phosphothioketal). Asp306 and Ile328 together coordinate UDP-N-acetyl-alpha-D-glucosamine.

This sequence belongs to the EPSP synthase family. MurA subfamily.

The protein localises to the cytoplasm. The enzyme catalyses phosphoenolpyruvate + UDP-N-acetyl-alpha-D-glucosamine = UDP-N-acetyl-3-O-(1-carboxyvinyl)-alpha-D-glucosamine + phosphate. It participates in cell wall biogenesis; peptidoglycan biosynthesis. In terms of biological role, cell wall formation. Adds enolpyruvyl to UDP-N-acetylglucosamine. The polypeptide is UDP-N-acetylglucosamine 1-carboxyvinyltransferase (Idiomarina loihiensis (strain ATCC BAA-735 / DSM 15497 / L2-TR)).